We begin with the raw amino-acid sequence, 306 residues long: Serine/threonine-protein kinase KIN28 (306 aa).

Positions 7-290 constitute a Protein kinase domain; that stretch reads YTKEKKVGEG…AVQCLESDYF (284 aa). ATP-binding positions include 13–21 and K36; that span reads VGEGTYAVV. The active-site Proton acceptor is D129. Residue T162 is modified to Phosphothreonine; by CAK.

This sequence belongs to the protein kinase superfamily. CMGC Ser/Thr protein kinase family. CDC2/CDKX subfamily. In terms of assembly, CCL1 and KIN28 form the TFIIK complex, a component of the TFIIH holo complex. Component of a complex consisting of KIN28, CCL1 and TFB3. Interacts with TFB3. Also interacts with HNT1 and HOG1. Phosphorylation of Thr-162 regulates the affinity of interaction between CCL1, KIN28 and TFB3. Thr-162 phosphorylation does not vary through the cell cycle and is necessary for full kinase activity.

It is found in the nucleus. The enzyme catalyses [DNA-directed RNA polymerase] + ATP = phospho-[DNA-directed RNA polymerase] + ADP + H(+). Functionally, catalytic component of the TFIIK complex (KIN28-CCL1 dimer) which is the protein kinase component of transcription factor IIH (TFIIH) and phosphorylates the C-terminal domain of RNA polymerase II during transition from transcription to elongation after preinitiation complex (PIC) formation, thereby positively regulating transcription. TFIIH (or factor B) is essential for both basal and activated transcription, and is involved in nucleotide excision repair (NER) of damaged DNA. TFIIH has DNA-dependent ATPase activity and is essential for polymerase II transcription in vitro. Essential for cell proliferation. This chain is Serine/threonine-protein kinase KIN28 (KIN28), found in Saccharomyces cerevisiae (strain ATCC 204508 / S288c) (Baker's yeast).